Consider the following 921-residue polypeptide: Inter-alpha-trypsin inhibitor heavy chain H4 (921 aa).

A signal peptide spans 1 to 27; sequence MKTLSPTGYGLLLVLPLLLAVLQSTTA. The VIT domain maps to 28–146; it reads HKNDINIYSL…KVTFELVYEE (119 aa). N-linked (GlcNAc...) asparagine glycosylation is found at Asn80, Asn205, and Asn242. The VWFA domain occupies 270 to 428; sequence PKNVIFVIDT…YAFLEKMALE (159 aa). Asn513 and Asn577 each carry an N-linked (GlcNAc...) asparagine glycan. Residues 591 to 646 are disordered; that stretch reads KPEGQEQSQVAEKPVENGNRQGNTHSGHSSFQFHSVGDRTSRLTGGSSVDPVFSHR. Residues 608-623 show a composition bias toward polar residues; that stretch reads GNRQGNTHSGHSSFQF. Residue Thr712 is glycosylated (O-linked (GalNAc...) threonine). A disulfide bond links Cys738 and Cys916.

This sequence belongs to the ITIH family. In terms of assembly, interacts (via C-terminus) with DNAJC1 (via SANT 2 domain). Appears to be both N- and O-glycosylated. In terms of processing, cleaved by plasma kallikrein to yield 55- and 25-kDa fragments. Liver specific.

The protein resides in the secreted. Its function is as follows. Type II acute-phase protein (APP) involved in inflammatory responses to trauma. May also play a role in liver development or regeneration. In Sus scrofa (Pig), this protein is Inter-alpha-trypsin inhibitor heavy chain H4 (ITIH4).